We begin with the raw amino-acid sequence, 524 residues long: Probable 1,3-beta-glucanosyltransferase GAS3 (524 aa).

The signal sequence occupies residues 1–21; that stretch reads MQLSKSILLAALAATPSLVNA. An intrachain disulfide couples Cys78 to Cys107. Residues Tyr96, Asn168, and Glu169 each coordinate (1,3-beta-D-glucosyl)n. The Proton donor role is filled by Glu169. N-linked (GlcNAc...) asparagine glycosylation is present at Asn201. Asp212 and Arg217 together coordinate (1,3-beta-D-glucosyl)n. Cystine bridges form between Cys226–Cys369 and Cys254–Cys286. An N-linked (GlcNAc...) asparagine glycan is attached at Asn269. Glu283 (nucleophile) is an active-site residue. Tyr315 provides a ligand contact to (1,3-beta-D-glucosyl)n. 4 N-linked (GlcNAc...) asparagine glycosylation sites follow: Asn350, Asn385, Asn404, and Asn422. A disordered region spans residues 461–498; it reads TSQSSSRSLTSSTSPSSSTGSSSSTGSSSASSSSKSKG. A lipid anchor (GPI-anchor amidated glycine) is attached at Gly498. Residues 499–524 constitute a propeptide, removed in mature form; that stretch reads VGNIVNVSFSQSGYLALFAGLISALL.

This sequence belongs to the glycosyl hydrolase 72 family. Post-translationally, the GPI-anchor is attached to the protein in the endoplasmic reticulum and serves to target the protein to the cell surface. There, the glucosamine-inositol phospholipid moiety is cleaved off and the GPI-modified mannoprotein is covalently attached via its lipidless GPI glycan remnant to the 1,6-beta-glucan of the outer cell wall layer. N-glycosylated.

The protein resides in the secreted. It is found in the cell wall. Its subcellular location is the membrane. In terms of biological role, splits internally a 1,3-beta-glucan molecule and transfers the newly generated reducing end (the donor) to the non-reducing end of another 1,3-beta-glucan molecule (the acceptor) forming a 1,3-beta linkage, resulting in the elongation of 1,3-beta-glucan chains in the cell wall. Involved in cell wall biosynthesis and morphogenesis. The protein is Probable 1,3-beta-glucanosyltransferase GAS3 (GAS3) of Saccharomyces cerevisiae (strain ATCC 204508 / S288c) (Baker's yeast).